A 177-amino-acid chain; its full sequence is RNA polymerase sigma-E factor (177 aa).

The short motif at 34-47 (DLLQTALARTYGRW) is the Polymerase core binding element. Positions 128 to 147 (TEETAAALGMSAGTVKSTLH) form a DNA-binding region, H-T-H motif.

The protein belongs to the sigma-70 factor family. ECF subfamily.

It is found in the cytoplasm. Functionally, sigma factors are initiation factors that promote the attachment of RNA polymerase to specific initiation sites and are then released. This sigma factor is required for normal cell wall integrity; it is recruited by RNA polymerase to transcribe genes with cell wall-related functions. It is also involved in the transcription of the dagA gene coding for an extracellular agar-degrading enzyme. This Streptomyces coelicolor (strain ATCC BAA-471 / A3(2) / M145) protein is RNA polymerase sigma-E factor (sigE).